The following is a 354-amino-acid chain: Inositol-tetrakisphosphate 1-kinase 1 (354 aa).

The span at 1 to 16 (MRVHEEASEDKEREVE) shows a compositional bias: basic and acidic residues. The segment at 1-24 (MRVHEEASEDKEREVEEAPDLMPL) is disordered. 2 residues coordinate 1D-myo-inositol 1,3,4-trisphosphate: Lys53 and Lys95. 2 residues coordinate ATP: Arg130 and Lys180. Residues 140 to 347 (LNLSNAYGEV…FLLSLVQNKY (208 aa)) form the ATP-grasp domain. The 1D-myo-inositol 1,3,4-trisphosphate site is built by His191 and Lys223. ATP contacts are provided by residues 212–223 (QEFVNHGGILFK) and Ser238. Mg(2+)-binding residues include Asp303, Asp318, and Asn320. Asn320 contributes to the 1D-myo-inositol 1,3,4-trisphosphate binding site.

This sequence belongs to the ITPK1 family. In terms of assembly, monomer. It depends on Mg(2+) as a cofactor. As to expression, expressed in roots, leaves, flowers, anthers and embryos.

The enzyme catalyses 1D-myo-inositol 3,4,5,6-tetrakisphosphate + ATP = 1D-myo-inositol 1,3,4,5,6-pentakisphosphate + ADP + H(+). It catalyses the reaction 1D-myo-inositol 1,3,4-trisphosphate + ATP = 1D-myo-inositol 1,3,4,5-tetrakisphosphate + ADP + H(+). The catalysed reaction is 1D-myo-inositol 1,3,4-trisphosphate + ATP = 1D-myo-inositol 1,3,4,6-tetrakisphosphate + ADP + H(+). Its function is as follows. Kinase that can phosphorylate various inositol polyphosphate such as Ins(3,4,5,6)P4 or Ins(1,3,4)P3 and participates in phytic acid biosynthesis in developing seeds. Phytic acid is the primary storage form of phosphorus in cereal grains and other plant seeds. This is Inositol-tetrakisphosphate 1-kinase 1 from Oryza sativa subsp. japonica (Rice).